A 376-amino-acid polypeptide reads, in one-letter code: Probable transcription factor At1g61730 (376 aa).

A disordered region spans residues Met-1–Lys-150. The segment covering Ser-17–Asp-40 has biased composition (acidic residues). The residue at position 49 (Ser-49) is a Phosphoserine. The segment covering Ser-49 to Asp-72 has biased composition (low complexity). Residues Ser-73 to Ser-83 show a composition bias toward acidic residues. Residues Asn-87–Asn-103 are compositionally biased toward polar residues.

Belongs to the GeBP family. As to quaternary structure, interacts with DEK3.

In Arabidopsis thaliana (Mouse-ear cress), this protein is Probable transcription factor At1g61730.